Reading from the N-terminus, the 302-residue chain is Sulfate adenylyltransferase subunit 2 (302 aa).

The interval 279–302 is disordered; it reads ERQGRAIDHDSSGSMELKKRQGYF. The segment covering 280–302 has biased composition (basic and acidic residues); that stretch reads RQGRAIDHDSSGSMELKKRQGYF.

It belongs to the PAPS reductase family. CysD subfamily. In terms of assembly, heterodimer composed of CysD, the smaller subunit, and CysN.

It catalyses the reaction sulfate + ATP + H(+) = adenosine 5'-phosphosulfate + diphosphate. The protein operates within sulfur metabolism; hydrogen sulfide biosynthesis; sulfite from sulfate: step 1/3. In terms of biological role, with CysN forms the ATP sulfurylase (ATPS) that catalyzes the adenylation of sulfate producing adenosine 5'-phosphosulfate (APS) and diphosphate, the first enzymatic step in sulfur assimilation pathway. APS synthesis involves the formation of a high-energy phosphoric-sulfuric acid anhydride bond driven by GTP hydrolysis by CysN coupled to ATP hydrolysis by CysD. In Aliivibrio fischeri (strain ATCC 700601 / ES114) (Vibrio fischeri), this protein is Sulfate adenylyltransferase subunit 2.